We begin with the raw amino-acid sequence, 207 residues long: 8-oxoguanine DNA glycosylase/AP lyase (207 aa).

Catalysis depends on residues K129 and D147.

The protein belongs to the type-2 OGG1 family.

The catalysed reaction is 2'-deoxyribonucleotide-(2'-deoxyribose 5'-phosphate)-2'-deoxyribonucleotide-DNA = a 3'-end 2'-deoxyribonucleotide-(2,3-dehydro-2,3-deoxyribose 5'-phosphate)-DNA + a 5'-end 5'-phospho-2'-deoxyribonucleoside-DNA + H(+). In terms of biological role, catalyzes the excision of an oxidatively damaged form of guanine (7,8-dihydro-8-oxoguanine = 8-oxoG) from DNA. Also cleaves the DNA backbone at apurinic/apyrimidinic sites (AP sites). Has little specificity for the base opposite oxoG. This is 8-oxoguanine DNA glycosylase/AP lyase from Methanocaldococcus jannaschii (strain ATCC 43067 / DSM 2661 / JAL-1 / JCM 10045 / NBRC 100440) (Methanococcus jannaschii).